A 120-amino-acid chain; its full sequence is NAD(P)H-quinone oxidoreductase subunit 3, chloroplastic (120 aa).

The next 3 helical transmembrane spans lie at 9-29, 64-84, and 88-108; these read IFWAFLIISSVIPILAFXISG, MFALVFVVFDVETVFLYPWAM, and VLGVSVFIEALIFVLILIVGL.

This sequence belongs to the complex I subunit 3 family. NDH is composed of at least 16 different subunits, 5 of which are encoded in the nucleus.

The protein localises to the plastid. It localises to the chloroplast thylakoid membrane. It carries out the reaction a plastoquinone + NADH + (n+1) H(+)(in) = a plastoquinol + NAD(+) + n H(+)(out). The catalysed reaction is a plastoquinone + NADPH + (n+1) H(+)(in) = a plastoquinol + NADP(+) + n H(+)(out). NDH shuttles electrons from NAD(P)H:plastoquinone, via FMN and iron-sulfur (Fe-S) centers, to quinones in the photosynthetic chain and possibly in a chloroplast respiratory chain. The immediate electron acceptor for the enzyme in this species is believed to be plastoquinone. Couples the redox reaction to proton translocation, and thus conserves the redox energy in a proton gradient. The chain is NAD(P)H-quinone oxidoreductase subunit 3, chloroplastic from Eucalyptus globulus subsp. globulus (Tasmanian blue gum).